The chain runs to 738 residues: Catalase-peroxidase (738 aa).

The first 24 residues, 1–24 (MEPLFPKRLLSIAVLCVASATAQA), serve as a signal peptide directing secretion. The tryptophyl-tyrosyl-methioninium (Trp-Tyr) (with M-252) cross-link spans 104–226 (WHAAGTYRMI…FGATEMGLIY (123 aa)). Residue histidine 105 is the Proton acceptor of the active site. The interval 191–213 (EEVNWGPEGQWLTDRRHSGDRKL) is disordered. Residues 203–213 (TDRRHSGDRKL) show a composition bias toward basic and acidic residues. The tryptophyl-tyrosyl-methioninium (Tyr-Met) (with W-104) cross-link spans 226 to 252 (YVNPEGPHGNPDPIAAAHDIRQAFGRM). Histidine 267 provides a ligand contact to heme b.

It belongs to the peroxidase family. Peroxidase/catalase subfamily. Homodimer or homotetramer. The cofactor is heme b. In terms of processing, formation of the three residue Trp-Tyr-Met cross-link is important for the catalase, but not the peroxidase activity of the enzyme.

The enzyme catalyses H2O2 + AH2 = A + 2 H2O. It catalyses the reaction 2 H2O2 = O2 + 2 H2O. Functionally, bifunctional enzyme with both catalase and broad-spectrum peroxidase activity. The protein is Catalase-peroxidase of Saccharophagus degradans (strain 2-40 / ATCC 43961 / DSM 17024).